A 445-amino-acid chain; its full sequence is Tubulin beta chain (445 aa).

An MREI motif motif is present at residues 1-4 (MREI). Gln11 provides a ligand contact to GTP. Phosphoserine is present on Ser40. Lys58 carries the N6-acetyllysine; alternate modification. Lys58 carries the N6-succinyllysine; alternate modification. Lys58 is covalently cross-linked (Glycyl lysine isopeptide (Lys-Gly) (interchain with G-Cter in ubiquitin); alternate). Positions 69, 138, 142, 143, and 144 each coordinate GTP. Residue Glu69 coordinates Mg(2+). Residue Ser172 is modified to Phosphoserine; by CDK1. Residues Asn204 and Asn226 each contribute to the GTP site. A phosphothreonine mark is found at Thr285 and Thr290. Arg318 carries the omega-N-methylarginine modification. A Glycyl lysine isopeptide (Lys-Gly) (interchain with G-Cter in ubiquitin) cross-link involves residue Lys324. The interval 424-445 (QYQDATADEQGEFEEEGEEDEA) is disordered. A compositionally biased stretch (acidic residues) spans 429-445 (TADEQGEFEEEGEEDEA). The residue at position 438 (Glu438) is a 5-glutamyl polyglutamate.

The protein belongs to the tubulin family. In terms of assembly, dimer of alpha and beta chains. A typical microtubule is a hollow water-filled tube with an outer diameter of 25 nm and an inner diameter of 15 nM. Alpha-beta heterodimers associate head-to-tail to form protofilaments running lengthwise along the microtubule wall with the beta-tubulin subunit facing the microtubule plus end conferring a structural polarity. Microtubules usually have 13 protofilaments but different protofilament numbers can be found in some organisms and specialized cells. Interacts with NCKAP5L. Mg(2+) serves as cofactor. Some glutamate residues at the C-terminus are polyglycylated, resulting in polyglycine chains on the gamma-carboxyl group. Glycylation is mainly limited to tubulin incorporated into axonemes (cilia and flagella) whereas glutamylation is prevalent in neuronal cells, centrioles, axonemes, and the mitotic spindle. Both modifications can coexist on the same protein on adjacent residues, and lowering polyglycylation levels increases polyglutamylation, and reciprocally. Cilia and flagella glycylation is required for their stability and maintenance. Flagella glycylation controls sperm motility. Post-translationally, some glutamate residues at the C-terminus are polyglutamylated, resulting in polyglutamate chains on the gamma-carboxyl group. Polyglutamylation plays a key role in microtubule severing by spastin (SPAST). SPAST preferentially recognizes and acts on microtubules decorated with short polyglutamate tails: severing activity by SPAST increases as the number of glutamates per tubulin rises from one to eight, but decreases beyond this glutamylation threshold. In terms of processing, phosphorylated on Ser-172 by CDK1 during the cell cycle, from metaphase to telophase, but not in interphase. This phosphorylation inhibits tubulin incorporation into microtubules.

It localises to the cytoplasm. It is found in the cytoskeleton. Functionally, tubulin is the major constituent of microtubules, a cylinder consisting of laterally associated linear protofilaments composed of alpha- and beta-tubulin heterodimers. Microtubules grow by the addition of GTP-tubulin dimers to the microtubule end, where a stabilizing cap forms. Below the cap, tubulin dimers are in GDP-bound state, owing to GTPase activity of alpha-tubulin. The protein is Tubulin beta chain of Sus scrofa (Pig).